Here is a 147-residue protein sequence, read N- to C-terminus: Large ribosomal subunit protein bL9 (147 aa).

The protein belongs to the bacterial ribosomal protein bL9 family.

In terms of biological role, binds to the 23S rRNA. This is Large ribosomal subunit protein bL9 from Bdellovibrio bacteriovorus (strain ATCC 15356 / DSM 50701 / NCIMB 9529 / HD100).